A 375-amino-acid chain; its full sequence is Protein NDRG3 (375 aa).

A disordered region spans residues 326–375 (RSRTHSASSSGSMEIPRSRSHTSNAQLKSSSNNSLSNQIQETPQTIELSC). Positions 348-363 (SNAQLKSSSNNSLSNQ) are enriched in low complexity. Residues 364–375 (IQETPQTIELSC) show a composition bias toward polar residues.

It belongs to the NDRG family.

In Xenopus laevis (African clawed frog), this protein is Protein NDRG3.